Consider the following 197-residue polypeptide: Proteinase inhibitor type-2 (197 aa).

The signal sequence occupies residues 1–24; the sequence is MAVHKVSFVAHLLVLGMFLLLVDA. Tandem repeats lie at residues 24–80, 81–140, and 141–196. 8 disulfides stabilise this stretch: cysteine 27-cysteine 115, cysteine 31-cysteine 111, cysteine 39-cysteine 121, cysteine 51-cysteine 88, cysteine 54-cysteine 72, cysteine 55-cysteine 84, cysteine 61-cysteine 97, and cysteine 114-cysteine 132.

It belongs to the protease inhibitor I20 (potato type II proteinase inhibitor) family.

In Nicotiana tabacum (Common tobacco), this protein is Proteinase inhibitor type-2.